A 460-amino-acid polypeptide reads, in one-letter code: UDP-N-acetylmuramoylalanine--D-glutamate ligase (460 aa).

Residue 115–121 (GTNGKTT) participates in ATP binding.

This sequence belongs to the MurCDEF family.

The protein resides in the cytoplasm. It carries out the reaction UDP-N-acetyl-alpha-D-muramoyl-L-alanine + D-glutamate + ATP = UDP-N-acetyl-alpha-D-muramoyl-L-alanyl-D-glutamate + ADP + phosphate + H(+). The protein operates within cell wall biogenesis; peptidoglycan biosynthesis. Functionally, cell wall formation. Catalyzes the addition of glutamate to the nucleotide precursor UDP-N-acetylmuramoyl-L-alanine (UMA). This Salinibacter ruber (strain DSM 13855 / M31) protein is UDP-N-acetylmuramoylalanine--D-glutamate ligase.